Consider the following 460-residue polypeptide: Putative arginine/ornithine antiporter (460 aa).

Residues 1 to 4 (MEKK) lie on the Cytoplasmic side of the membrane. Residues 5 to 25 (LGLSALTALVLSSMLGAGVFS) form a helical membrane-spanning segment. At 26 to 38 (LPQNMAAVASPAA) the chain is on the periplasmic side. The chain crosses the membrane as a helical span at residues 39–59 (LLIGWGITGAGILLLAFAMLI). The Cytoplasmic segment spans residues 60 to 92 (LTRIRPELDGGIFTYAREGFGELIGFCSAWGYW). Residues 93–113 (LCAVIANVSYLVIVFSALSFF) form a helical membrane-spanning segment. Residues 114-125 (TDTPELRLFGDG) lie on the Periplasmic side of the membrane. A helical transmembrane segment spans residues 126–146 (NTWQSIVGASALLWIVHFLIL). Residues 147 to 157 (RGVQTAASINL) are Cytoplasmic-facing. The chain crosses the membrane as a helical span at residues 158-178 (VATLAKLLPLGLFVVLAMMMF). Residues 179 to 201 (KLDTFKLDFTGLALGVPVWEQVK) are Periplasmic-facing. A helical membrane pass occupies residues 202 to 222 (NTMLITLWVFIGVEGAVVVSA). At 223 to 235 (RARNKRDVGKATL) the chain is on the cytoplasmic side. A helical transmembrane segment spans residues 236 to 256 (LAVLSALGVYLLVTLLSLGVV). Residues 257–282 (ARPELAEIRNPSMAGLMVEMMGPWGE) are Periplasmic-facing. A helical transmembrane segment spans residues 283 to 303 (IIIAAGLIVSVCGAYLSWTIM). The Cytoplasmic portion of the chain corresponds to 304–331 (AAEVPFLAATHKAFPRIFARQNAQAAPS). Residues 332–352 (ASLWLTNICVQICLVLIWLTG) form a helical membrane-spanning segment. At 353 to 357 (SDYNT) the chain is on the periplasmic side. The chain crosses the membrane as a helical span at residues 358–378 (LLTIASEMILVPYFLVGAFLL). The Cytoplasmic segment spans residues 379–384 (KIATRP). A run of 2 helical transmembrane segments spans residues 385 to 405 (LHKAVGVGACIYGLWLLYASG) and 406 to 426 (PMHLLLSVVLYAPGLLVFLYA). Residues 427–439 (RKTHTHDNVLNRQ) are Cytoplasmic-facing. A helical membrane pass occupies residues 440-460 (EMVLIGMLLIASVPATWMLVG).

This sequence belongs to the amino acid-polyamine-organocation (APC) superfamily. Basic amino acid/polyamine antiporter (APA) (TC 2.A.3.2) family.

Its subcellular location is the cell inner membrane. The catalysed reaction is L-ornithine(in) + L-arginine(out) = L-ornithine(out) + L-arginine(in). In terms of biological role, catalyzes electroneutral exchange between arginine and ornithine to allow high-efficiency energy conversion in the arginine deiminase pathway. The sequence is that of Putative arginine/ornithine antiporter (ydgI) from Escherichia coli O6:H1 (strain CFT073 / ATCC 700928 / UPEC).